Reading from the N-terminus, the 60-residue chain is Sec-independent protein translocase protein TatA (60 aa).

A helical membrane pass occupies residues 1-21 (MAGLGVTELLIILAIVIVLFG).

It belongs to the TatA/E family. Forms a complex with TatC.

It is found in the cell membrane. Part of the twin-arginine translocation (Tat) system that transports large folded proteins containing a characteristic twin-arginine motif in their signal peptide across membranes. TatA could form the protein-conducting channel of the Tat system. The chain is Sec-independent protein translocase protein TatA from Herpetosiphon aurantiacus (strain ATCC 23779 / DSM 785 / 114-95).